Reading from the N-terminus, the 306-residue chain is uncharacterized protein (306 aa).

Residues 1–6 lie on the Cytoplasmic side of the membrane; the sequence is MRFRQL. A helical transmembrane segment spans residues 7–27; that stretch reads LPLFGALFALYIIWGSTYFVI. An EamA 1 domain is found at 18 to 141; that stretch reads IIWGSTYFVI…GLAGIIMLNS (124 aa). Topologically, residues 28 to 36 are periplasmic; the sequence is RIGVESWPP. Residues 37–57 form a helical membrane-spanning segment; sequence LMMAGVRFLAAGILLLAFLLL. Topologically, residues 58–67 are cytoplasmic; it reads RGHKLPPLRP. Residues 68–88 form a helical membrane-spanning segment; it reads LLNAALIGLLLLAVGNGMVTV. The Periplasmic segment spans residues 89-93; that stretch reads AEHQN. A helical membrane pass occupies residues 94–114; the sequence is VPSGIAAVVVATVPLFTLCFS. The Cytoplasmic portion of the chain corresponds to 115-125; it reads RLFGIKTRKLE. A helical membrane pass occupies residues 126–146; that stretch reads WVGIAIGLAGIIMLNSGGNLS. Over 147–148 the chain is Periplasmic; it reads GN. Residues 149 to 169 traverse the membrane as a helical segment; it reads PWGAILILIGSISWAFGSVYG. In terms of domain architecture, EamA 2 spans 160-285; it reads ISWAFGSVYG…IVFAVVLVTL (126 aa). The Cytoplasmic portion of the chain corresponds to 170–173; the sequence is SRIT. A helical transmembrane segment spans residues 174–194; the sequence is LPVGMMAGAIEMLAAGVVLMI. At 195-206 the chain is on the periplasmic side; the sequence is ASMIAGEKLTAL. A helical transmembrane segment spans residues 207–227; it reads PSLSGFLAVGYLALFGSIIAI. Over 228 to 239 the chain is Cytoplasmic; that stretch reads NAYMYLIRNVSP. A helical transmembrane segment spans residues 240–260; the sequence is ALATSYAYVNPVVAVLLGTGL. Over 261–269 the chain is Periplasmic; it reads GGETLSKIE. The helical transmembrane segment at 270 to 290 threads the bilayer; the sequence is WLALGVIVFAVVLVTLGKYLF. Over 291–306 the chain is Cytoplasmic; sequence PAKPVVAPVIQDASSE.

It belongs to the EamA transporter family.

It localises to the cell inner membrane. This is an uncharacterized protein from Escherichia coli O157:H7.